Here is a 307-residue protein sequence, read N- to C-terminus: Oxygen-dependent coproporphyrinogen-III oxidase (307 aa).

Ser-99 contacts substrate. A divalent metal cation contacts are provided by His-103 and His-113. His-113 functions as the Proton donor in the catalytic mechanism. 115 to 117 (NVR) is a substrate binding site. The a divalent metal cation site is built by His-152 and His-182. An important for dimerization region spans residues 247–282 (YVEFNLVFDRGTLFGLQSGGRTESILLSMPPTAGWR). 265-267 (GGR) is a binding site for substrate.

Belongs to the aerobic coproporphyrinogen-III oxidase family. As to quaternary structure, homodimer. It depends on a divalent metal cation as a cofactor.

The protein resides in the cytoplasm. It carries out the reaction coproporphyrinogen III + O2 + 2 H(+) = protoporphyrinogen IX + 2 CO2 + 2 H2O. Its pathway is porphyrin-containing compound metabolism; protoporphyrin-IX biosynthesis; protoporphyrinogen-IX from coproporphyrinogen-III (O2 route): step 1/1. Functionally, involved in the heme biosynthesis. Catalyzes the aerobic oxidative decarboxylation of propionate groups of rings A and B of coproporphyrinogen-III to yield the vinyl groups in protoporphyrinogen-IX. The chain is Oxygen-dependent coproporphyrinogen-III oxidase from Burkholderia mallei (strain SAVP1).